Consider the following 412-residue polypeptide: Light-independent protochlorophyllide reductase subunit N (412 aa).

[4Fe-4S] cluster-binding residues include Cys17, Cys42, and Cys103.

Belongs to the BchN/ChlN family. As to quaternary structure, protochlorophyllide reductase is composed of three subunits; ChlL, ChlN and ChlB. Forms a heterotetramer of two ChlB and two ChlN subunits. [4Fe-4S] cluster is required as a cofactor.

The catalysed reaction is chlorophyllide a + oxidized 2[4Fe-4S]-[ferredoxin] + 2 ADP + 2 phosphate = protochlorophyllide a + reduced 2[4Fe-4S]-[ferredoxin] + 2 ATP + 2 H2O. It participates in porphyrin-containing compound metabolism; chlorophyll biosynthesis (light-independent). Component of the dark-operative protochlorophyllide reductase (DPOR) that uses Mg-ATP and reduced ferredoxin to reduce ring D of protochlorophyllide (Pchlide) to form chlorophyllide a (Chlide). This reaction is light-independent. The NB-protein (ChlN-ChlB) is the catalytic component of the complex. In Synechococcus sp. (strain CC9902), this protein is Light-independent protochlorophyllide reductase subunit N.